Here is a 502-residue protein sequence, read N- to C-terminus: Maturase K (502 aa).

Belongs to the intron maturase 2 family. MatK subfamily.

It is found in the plastid. The protein resides in the chloroplast. Usually encoded in the trnK tRNA gene intron. Probably assists in splicing its own and other chloroplast group II introns. The chain is Maturase K from Sisymbrium irio (London rocket).